Here is a 1058-residue protein sequence, read N- to C-terminus: Kinesin-like protein KIN-5D (1058 aa).

The disordered stretch occupies residues 1–43 (MDSIQQRRGGIVSLSPAQTPRSSDKSARESRSSESNSTNRNDK). Basic and acidic residues predominate over residues 22–32 (SSDKSARESRS). The Kinesin motor domain maps to 48–390 (NVQVILRCRP…LDYAHRAKNI (343 aa)). 134-141 (GQTGTGKT) contributes to the ATP binding site. The stretch at 438-517 (QEEAEKKAMA…QANATIKEKE (80 aa)) forms a coiled coil.

This sequence belongs to the TRAFAC class myosin-kinesin ATPase superfamily. Kinesin family. KIN-5/BimC subfamily.

It is found in the cytoplasm. The protein resides in the cytoskeleton. The protein localises to the spindle. Its function is as follows. Responsible for microtubule translocation. May be important for the organization of phragmoplast-specific arrays of microtubules. Plays an essential role in stabilizing the mitotic spindle. Required during mitotic cytokinesis. The protein is Kinesin-like protein KIN-5D of Arabidopsis thaliana (Mouse-ear cress).